Here is a 292-residue protein sequence, read N- to C-terminus: Ephrin type-A receptor 4a (292 aa).

ATP contacts are provided by residues 1-9 (IGIGEFGEV) and lysine 27. Residues 1 to 265 (IGIGEFGEVC…QIVNMLDKLI (265 aa)) form the Protein kinase domain. Aspartate 120 serves as the catalytic Proton acceptor. Tyrosine 153 carries the post-translational modification Phosphotyrosine; by autocatalysis.

Belongs to the protein kinase superfamily. Tyr protein kinase family. Ephrin receptor subfamily. Widely expressed in the developing nervous system.

It is found in the cell membrane. It localises to the early endosome. It catalyses the reaction L-tyrosyl-[protein] + ATP = O-phospho-L-tyrosyl-[protein] + ADP + H(+). Its function is as follows. Receptor tyrosine kinase which binds membrane-bound ephrin family ligands residing on adjacent cells, leading to contact-dependent bidirectional signaling into neighboring cells. The signaling pathway downstream of the receptor is referred to as forward signaling while the signaling pathway downstream of the ephrin ligand is referred to as reverse signaling. Highly promiscuous, it has the unique property among Eph receptors to bind and to be physiologically activated by both GPI-anchored ephrin-A and transmembrane ephrin-B ligands including efna1 and efnb3. Upon activation by ephrin ligands, modulates cell morphology and integrin-dependent cell adhesion through regulation of the Rac, Rap and Rho GTPases activity. Plays an important role in the development of the nervous system controlling different steps of axonal guidance including the establishment of the corticospinal projections. The chain is Ephrin type-A receptor 4a (epha4a) from Danio rerio (Zebrafish).